A 155-amino-acid chain; its full sequence is Large ribosomal subunit protein eL19 (155 aa).

Over residues 66-84 (VRHLQRRKGRRRGMGRRKG) the composition is skewed to basic residues. Positions 66–85 (VRHLQRRKGRRRGMGRRKGV) are disordered.

It belongs to the eukaryotic ribosomal protein eL19 family. As to quaternary structure, part of the 50S ribosomal subunit.

Binds to the 23S rRNA. The chain is Large ribosomal subunit protein eL19 from Aeropyrum pernix (strain ATCC 700893 / DSM 11879 / JCM 9820 / NBRC 100138 / K1).